Here is a 522-residue protein sequence, read N- to C-terminus: Monogalactosyldiacylglycerol synthase, chloroplastic (522 aa).

A chloroplast-targeting transit peptide spans 1-98 (MSHPSTVTSE…RIPLGFSSIG (98 aa)).

Belongs to the glycosyltransferase 28 family. As to quaternary structure, homodimer. The cofactor is Zn(2+).

The protein localises to the plastid. The protein resides in the chloroplast inner membrane. It catalyses the reaction a 1,2-diacyl-sn-glycerol + UDP-alpha-D-galactose = a 1,2-diacyl-3-O-(beta-D-galactosyl)-sn-glycerol + UDP + H(+). Inhibited by ortho-phenanthroline and UDP (competitive inhibitor relatively to UDP-Gal only) and inactivated by citraconic anhydride, tert-butoxycarbonyl-L-methionine hydrosuccinimidyl ester (SLR) and N-ethylmaleimide (NEM). Functionally, involved in the synthesis of the major structural component of photosynthetic membranes. The 1,2-diacylglycerol substrate preference is 18:2/18:2 &gt; 18:0/18:1 &gt; 18:1/18:1 &gt; 18:1/16:0 &gt; 16:0/18:2 &gt; 18:3/18:3 &gt; 16:0/18:1 &gt; 16:0/16:0 &gt; 18:0/18:0. The polypeptide is Monogalactosyldiacylglycerol synthase, chloroplastic (MGD A) (Spinacia oleracea (Spinach)).